A 292-amino-acid polypeptide reads, in one-letter code: uncharacterized protein (292 aa).

A helical transmembrane segment spans residues 175–197 (VLNFYFTALPYAIDGIISGIGVF).

The protein resides in the membrane. This is an uncharacterized protein from Methanocaldococcus jannaschii (strain ATCC 43067 / DSM 2661 / JAL-1 / JCM 10045 / NBRC 100440) (Methanococcus jannaschii).